A 666-amino-acid chain; its full sequence is ATP synthase subunit alpha 2 (666 aa).

Gly182–Thr189 lines the ATP pocket. The disordered stretch occupies residues Met527 to Arg666. Residues Ala545 to Ala590 show a composition bias toward basic and acidic residues. Positions Ala591–Pro601 are enriched in low complexity. Basic and acidic residues predominate over residues Ala623–Ala641.

It belongs to the ATPase alpha/beta chains family. As to quaternary structure, F-type ATPases have 2 components, CF(1) - the catalytic core - and CF(0) - the membrane proton channel. CF(1) has five subunits: alpha(3), beta(3), gamma(1), delta(1), epsilon(1). CF(0) has three main subunits: a(1), b(2) and c(9-12). The alpha and beta chains form an alternating ring which encloses part of the gamma chain. CF(1) is attached to CF(0) by a central stalk formed by the gamma and epsilon chains, while a peripheral stalk is formed by the delta and b chains.

The protein localises to the cell inner membrane. It carries out the reaction ATP + H2O + 4 H(+)(in) = ADP + phosphate + 5 H(+)(out). Its function is as follows. Produces ATP from ADP in the presence of a proton gradient across the membrane. The alpha chain is a regulatory subunit. This chain is ATP synthase subunit alpha 2, found in Burkholderia pseudomallei (strain 1106a).